A 641-amino-acid polypeptide reads, in one-letter code: Protein BCAP (641 aa).

4 coiled-coil regions span residues 83-144, 191-270, 299-375, and 487-599; these read HWPV…KQND, EKDN…RKLE, QKQK…EREQ, and FKLE…TLNA.

This sequence belongs to the ODF2 family.

It localises to the cytoplasm. The protein resides in the cytoskeleton. Its subcellular location is the microtubule organizing center. It is found in the centrosome. The protein localises to the centriole. It localises to the centriolar satellite. The protein resides in the cilium basal body. Functionally, acts as a suppressor of ciliogenesis, specifically, the initiation of ciliogenesis. The sequence is that of Protein BCAP (odf2l) from Xenopus laevis (African clawed frog).